We begin with the raw amino-acid sequence, 199 residues long: MANMAVSRIKREFKEVMRSEEIVQCSIKIELVNDSWTELRGEIAGPPDTPYEGGKFVLEIKVPETYPFNPPKVRFITRIWHPNISSVTGAICLDILKDNWAAAMTLRTVLLSLQALLAAAEPDDPQDAVVAYQFKDKYDLFLLTAKHWTNAYAGGPHTFPDCDSKIQRLRDMGIDEHEARAVLSKENWNLEKATEGLFS.

A UBC core domain is found at M4–G154. The active-site Glycyl thioester intermediate is the C92. In terms of domain architecture, UBA spans D161–S199.

Belongs to the ubiquitin-conjugating enzyme family. In terms of assembly, interacts with Rpn10. As to expression, during gastrulation, expression is highest in the invaginating posterior midgut primordium (PMG), high expression is also observed in the cephalic furrow and ventral ectodermal neurogenic region. In stage 10-11 embryos, expression is high in the pole cells present in the pocket formed by the PMG. During germ band retraction, expression appears to reinitiate in many tissues, especially the gut and nervous system. After dorsal closure, expression is detectable at low levels throughout the embryo.

It carries out the reaction S-ubiquitinyl-[E1 ubiquitin-activating enzyme]-L-cysteine + [E2 ubiquitin-conjugating enzyme]-L-cysteine = [E1 ubiquitin-activating enzyme]-L-cysteine + S-ubiquitinyl-[E2 ubiquitin-conjugating enzyme]-L-cysteine.. It participates in protein modification; protein ubiquitination. In terms of biological role, catalyzes the covalent attachment of ubiquitin to other proteins. This Drosophila melanogaster (Fruit fly) protein is Ubiquitin-conjugating enzyme E2-22 kDa.